Reading from the N-terminus, the 227-residue chain is E3 ubiquitin-protein ligase ZNRF1 (227 aa).

Residues 1-42 (MGGKQSTAARSRGPFPGVSTDDSAVPPPGGAPHFGHYRTGGG) are disordered. G2 is lipidated: N-myristoyl glycine. A required for endosomal and lysosomal localization and myristoylation region spans residues 2–10 (GGKQSTAAR). Phosphoserine occurs at positions 50, 52, and 53. Positions 65 to 105 (GGVPFSLYTPASRGTGDSERAPGGGGSTSDSTYAHGNGYQE) are disordered. A Phosphotyrosine modification is found at Y103. S123 carries the post-translational modification Phosphoserine. An RING-type; atypical zinc finger spans residues 184-225 (CVICLEELLQGDTIARLPCLCIYHKSCIDSWFEVNRSCPEHP).

In terms of assembly, interacts with AKT1, GLUL and TUBB2A. Interacts with ZNRF2. Interacts (via its RING domain) with UBE2N. Interacts (when phosphorylated) with YWHAE. Post-translationally, N-myristoylation targets ZNRF1 to intracellular membranes. Phosphorylated by SRC at Tyr-103; leading to 'Lys-63'-linked ubiquitination of TLR3, lysosomal trafficking and degradation.

It localises to the endosome. It is found in the lysosome. The protein resides in the membrane. The protein localises to the cytoplasmic vesicle. Its subcellular location is the secretory vesicle. It localises to the synaptic vesicle membrane. The catalysed reaction is S-ubiquitinyl-[E2 ubiquitin-conjugating enzyme]-L-cysteine + [acceptor protein]-L-lysine = [E2 ubiquitin-conjugating enzyme]-L-cysteine + N(6)-ubiquitinyl-[acceptor protein]-L-lysine.. Its pathway is protein modification; protein ubiquitination. Functionally, E3 ubiquitin-protein ligase that plays a role in different processes including cell differentiation, receptor recycling or regulation of inflammation. Mediates the ubiquitination of AKT1 and GLUL, thereby playing a role in neuron cells differentiation. Plays a role in the establishment and maintenance of neuronal transmission and plasticity. Regulates Schwann cells differentiation by mediating ubiquitination of GLUL. Promotes neurodegeneration by mediating 'Lys-48'-linked polyubiquitination and subsequent degradation of AKT1 in axons: degradation of AKT1 prevents AKT1-mediated phosphorylation of GSK3B, leading to GSK3B activation and phosphorylation of DPYSL2/CRMP2 followed by destabilization of microtubule assembly in axons. Ubiquitinates the Na(+)/K(+) ATPase alpha-1 subunit/ATP1A1 and thereby influences its endocytosis and/or degradation. Controls ligand-induced EGFR signaling via mediating receptor ubiquitination and recruitment of the ESCRT machinery. Acts as a negative feedback mechanism controlling TLR3 trafficking by mediating TLR3 'Lys-63'-linked polyubiquitination to reduce type I IFN production. Modulates inflammation by promoting caveolin-1/CAV1 ubiquitination and degradation to regulate TLR4-activated immune response. The polypeptide is E3 ubiquitin-protein ligase ZNRF1 (Znrf1) (Mus musculus (Mouse)).